Consider the following 452-residue polypeptide: CCA-adding enzyme (452 aa).

The ATP site is built by serine 54 and arginine 57. Serine 54 and arginine 57 together coordinate CTP. Aspartate 66, aspartate 68, and aspartate 117 together coordinate Mg(2+). 3 residues coordinate ATP: histidine 140, lysine 160, and tyrosine 169. Residues histidine 140, lysine 160, and tyrosine 169 each contribute to the CTP site.

Belongs to the tRNA nucleotidyltransferase/poly(A) polymerase family. Archaeal CCA-adding enzyme subfamily. Homodimer. The cofactor is Mg(2+).

The catalysed reaction is a tRNA precursor + 2 CTP + ATP = a tRNA with a 3' CCA end + 3 diphosphate. The enzyme catalyses a tRNA with a 3' CCA end + 2 CTP + ATP = a tRNA with a 3' CCACCA end + 3 diphosphate. Functionally, catalyzes the addition and repair of the essential 3'-terminal CCA sequence in tRNAs without using a nucleic acid template. Adds these three nucleotides in the order of C, C, and A to the tRNA nucleotide-73, using CTP and ATP as substrates and producing inorganic pyrophosphate. tRNA 3'-terminal CCA addition is required both for tRNA processing and repair. Also involved in tRNA surveillance by mediating tandem CCA addition to generate a CCACCA at the 3' terminus of unstable tRNAs. While stable tRNAs receive only 3'-terminal CCA, unstable tRNAs are marked with CCACCA and rapidly degraded. This Halobacterium salinarum (strain ATCC 29341 / DSM 671 / R1) protein is CCA-adding enzyme.